We begin with the raw amino-acid sequence, 319 residues long: Methionyl-tRNA formyltransferase (319 aa).

Ser115 to Pro118 lines the (6S)-5,6,7,8-tetrahydrofolate pocket.

Belongs to the Fmt family.

It carries out the reaction L-methionyl-tRNA(fMet) + (6R)-10-formyltetrahydrofolate = N-formyl-L-methionyl-tRNA(fMet) + (6S)-5,6,7,8-tetrahydrofolate + H(+). Functionally, attaches a formyl group to the free amino group of methionyl-tRNA(fMet). The formyl group appears to play a dual role in the initiator identity of N-formylmethionyl-tRNA by promoting its recognition by IF2 and preventing the misappropriation of this tRNA by the elongation apparatus. This Lactococcus lactis subsp. lactis (strain IL1403) (Streptococcus lactis) protein is Methionyl-tRNA formyltransferase.